The sequence spans 173 residues: Flagellar biosynthetic protein FliV (173 aa).

Belongs to the FliB family.

Functionally, required for the secretion of flagellin and expression of motility. The chain is Flagellar biosynthetic protein FliV (fliV) from Salmonella muenchen.